Reading from the N-terminus, the 340-residue chain is Geranylgeranyl pyrophosphate synthase atmG (340 aa).

Positions 19 to 48 are enriched in polar residues; that stretch reads NLDASYPTSSSLSTEPIDTRSSSPQGSAST. The interval 19 to 51 is disordered; that stretch reads NLDASYPTSSSLSTEPIDTRSSSPQGSASTPVD. 3 residues coordinate isopentenyl diphosphate: lysine 69, arginine 72, and histidine 101. Mg(2+) contacts are provided by aspartate 108 and aspartate 112. Arginine 117 contacts dimethylallyl diphosphate. Residue arginine 118 coordinates isopentenyl diphosphate. Positions 195, 196, and 229 each coordinate dimethylallyl diphosphate. Aspartate 232 serves as a coordination point for Mg(2+). Dimethylallyl diphosphate-binding residues include asparagine 236, lysine 246, and lysine 256.

The protein belongs to the FPP/GGPP synthase family. The cofactor is Mg(2+).

The enzyme catalyses isopentenyl diphosphate + dimethylallyl diphosphate = (2E)-geranyl diphosphate + diphosphate. The catalysed reaction is isopentenyl diphosphate + (2E)-geranyl diphosphate = (2E,6E)-farnesyl diphosphate + diphosphate. It carries out the reaction isopentenyl diphosphate + (2E,6E)-farnesyl diphosphate = (2E,6E,10E)-geranylgeranyl diphosphate + diphosphate. Geranylgeranyl pyrophosphate synthase; part of the ATM1 gene cluster that mediates the biosynthesis of aflatrem, a tremorgenic mycotoxin with acute neurotoxic effects. Synthesis of geranylgeranyl diphosphate (GGPP) by AtmG (a GGPP synthase) precedes condensation of GGPP with indole 3-glycerol phosphate, followed by epoxidation and cyclization by AtmM (a FAD-dependent monooxygenase) and AtmC (a prenyltransferase) to produce paspaline. AtmB is also essential for paspaline production, but its exact role has not been identified yet. AtmP, a cytochrome P450 monooxygenase, subsequently converts paspaline to 13-desoxypaxilline via PC-M6 by removal of the C-30 methyl group and oxidation at C-10. AtmQ, a cytochrome P450 monooxygenase, then catalyzes the oxidation of 13-desoxypaxilline, first at C-7 to produce paspalicine and then at C-13 to form paspalinine. Finally, AtmD prenylates paspalinine to form aflatrem. In Aspergillus flavus, this protein is Geranylgeranyl pyrophosphate synthase atmG.